The sequence spans 297 residues: ATP phosphoribosyltransferase (297 aa).

Belongs to the ATP phosphoribosyltransferase family.

It is found in the cytoplasm. It catalyses the reaction 1-(5-phospho-beta-D-ribosyl)-ATP + diphosphate = 5-phospho-alpha-D-ribose 1-diphosphate + ATP. Its pathway is amino-acid biosynthesis; L-histidine biosynthesis; L-histidine from 5-phospho-alpha-D-ribose 1-diphosphate: step 1/9. Functionally, catalyzes the condensation of ATP and 5-phosphoribose 1-diphosphate to form N'-(5'-phosphoribosyl)-ATP (PR-ATP). Has a crucial role in the pathway because the rate of histidine biosynthesis seems to be controlled primarily by regulation of the enzymatic activity. The sequence is that of ATP phosphoribosyltransferase (HIS1) from Kluyveromyces lactis (strain ATCC 8585 / CBS 2359 / DSM 70799 / NBRC 1267 / NRRL Y-1140 / WM37) (Yeast).